The following is a 179-amino-acid chain: tRNA (cytidine(56)-2'-O)-methyltransferase (179 aa).

Leucine 84 is a binding site for S-adenosyl-L-methionine.

Belongs to the aTrm56 family. In terms of assembly, homodimer.

The protein resides in the cytoplasm. The enzyme catalyses cytidine(56) in tRNA + S-adenosyl-L-methionine = 2'-O-methylcytidine(56) in tRNA + S-adenosyl-L-homocysteine + H(+). Its function is as follows. Specifically catalyzes the AdoMet-dependent 2'-O-ribose methylation of cytidine at position 56 in tRNAs. This is tRNA (cytidine(56)-2'-O)-methyltransferase from Methanothermobacter thermautotrophicus (strain ATCC 29096 / DSM 1053 / JCM 10044 / NBRC 100330 / Delta H) (Methanobacterium thermoautotrophicum).